A 278-amino-acid polypeptide reads, in one-letter code: MSVFDLFRGFFGFPGPRSHRDPFFGGMTRDDDDDEDDEEEEDSGAWGRESYAFDGFHPTEEFGFSFSPRGGMRFHGNFGFDDLVRDFNSIFSEMGAWTLPSHSPELPGPESETPGVRLREGQTLRDSMLKYPDSHQPRIFEGVLESHAKPESSKPAPDWGSQGPFHRLDDTWPVSPHSRAREDKDLDSQVSQEGLGPLLQPQPKSYFKSISVTKITKPDGTVEEHRTVVDSEGRRETTVTHQEAHDSSRSDPDPPRSSALDDPFSILDLLLGRWFRSR.

Ser2 carries the N-acetylserine modification. Residues 2–43 form a required for localization in mitochondria region; that stretch reads SVFDLFRGFFGFPGPRSHRDPFFGGMTRDDDDDEDDEEEEDS. Disordered regions lie at residues 15–50 and 99–262; these read GPRSHRDPFFGGMTRDDDDDEDDEEEEDSGAWGRES and LPSH…ALDD. The segment covering 30–43 has biased composition (acidic residues); sequence DDDDDEDDEEEEDS. Residues 113–278 form an involved in HCLS1 binding region; the sequence is TPGVRLREGQ…LLLGRWFRSR (166 aa). Basic and acidic residues predominate over residues 132–152; it reads PDSHQPRIFEGVLESHAKPES. The involved in CASP9 binding stretch occupies residues 174–205; sequence VSPHSRAREDKDLDSQVSQEGLGPLLQPQPKS. Residues 175-246 form an involved in GNA13 binding region; sequence SPHSRAREDK…TTVTHQEAHD (72 aa). Residues 182–278 form a required for localization in sarcoplasmic reticulum region; the sequence is EDKDLDSQVS…LLLGRWFRSR (97 aa). Residues 183–278 form an involved in PKD2 binding region; that stretch reads DKDLDSQVSQ…LLLGRWFRSR (96 aa). Residues Ser188 and Ser191 each carry the phosphoserine modification. Residues 202-224 are involved in PLN binding; sequence QPKSYFKSISVTKITKPDGTVEE. An involved in ATP2A2 binding region spans residues 202-244; the sequence is QPKSYFKSISVTKITKPDGTVEEHRTVVDSEGRRETTVTHQEA. Residues 209-278 are mediates interaction with UCP3; sequence SISVTKITKP…LLLGRWFRSR (70 aa). Residues 216-254 show a composition bias toward basic and acidic residues; sequence TKPDGTVEEHRTVVDSEGRRETTVTHQEAHDSSRSDPDP. The tract at residues 269 to 278 is required for ITGB6 binding; the sequence is LLLGRWFRSR.

It belongs to the HAX1 family. Interacts with ABCB1, ABCB4 and ABCB11. Directly associates with HCLS1/HS1, through binding to its N-terminal region. Interacts with CTTN. Interacts with PKD2. Interacts with GNA13. Interacts with CASP9. Interacts with ITGB6. Interacts with PLN and ATP2A2; these interactions are inhibited by calcium. Interacts with GRB7. Interacts (via C-terminus) with XIAP/BIRC4 (via BIR 2 domain and BIR 3 domain) and this interaction blocks ubiquitination of XIAP/BIRC4. Interacts with TPC2. Interacts with KCNC3. Interacts with XPO1. Interacts with RNF217. Interacts with UCP3; the interaction is direct and calcium-dependent. Interacts with MAPRE2; this interaction regulates cell migration in keratinocytes. Present in striated muscles (at protein level).

The protein localises to the mitochondrion matrix. Its subcellular location is the endoplasmic reticulum. It is found in the nucleus membrane. The protein resides in the cytoplasmic vesicle. It localises to the cytoplasm. The protein localises to the cell cortex. Its subcellular location is the cell membrane. It is found in the sarcoplasmic reticulum. The protein resides in the P-body. It localises to the nucleus. Its function is as follows. Recruits the Arp2/3 complex to the cell cortex and regulates reorganization of the cortical actin cytoskeleton via its interaction with KCNC3 and the Arp2/3 complex. Slows down the rate of inactivation of KCNC3 channels. Promotes GNA13-mediated cell migration. Involved in the clathrin-mediated endocytosis pathway. May be involved in internalization of ABC transporters such as ABCB11. May inhibit CASP9 and CASP3. Promotes cell survival. May regulate intracellular calcium pools. This Rattus norvegicus (Rat) protein is HCLS1-associated protein X-1 (Hax1).